A 594-amino-acid polypeptide reads, in one-letter code: Glutamate decarboxylase 1 (594 aa).

Low complexity predominate over residues 1-13 (MASSTPSSSATSS). The segment at 1–22 (MASSTPSSSATSSNAGADPNTA) is disordered. The residue at position 78 (serine 78) is a Phosphoserine. Residue 190 to 192 (QLS) coordinates 4-aminobutanoate. N6-(pyridoxal phosphate)lysine is present on lysine 405. Arginine 567 is a binding site for 4-aminobutanoate.

Belongs to the group II decarboxylase family. Homodimer. Pyridoxal 5'-phosphate serves as cofactor.

The catalysed reaction is L-glutamate + H(+) = 4-aminobutanoate + CO2. In terms of biological role, catalyzes the synthesis of the inhibitory neurotransmitter gamma-aminobutyric acid (GABA) with pyridoxal 5'-phosphate as cofactor. The protein is Glutamate decarboxylase 1 (GAD1) of Canis lupus familiaris (Dog).